A 282-amino-acid polypeptide reads, in one-letter code: PTS system sorbose-specific EIID component (282 aa).

The region spanning 13-281 (TKITKGDMFK…GIVGYWLGIL (269 aa)) is the PTS EIID domain. 4 consecutive transmembrane segments (helical) span residues 135–155 (LGASLALQGSWLGPILFFVAF), 197–217 (GLFIMGILVTKWTTINVPLVV), 234–254 (ILDQFCPGLLALGWTLLCMYL), and 261–281 (PILLIFALFGVGIVGYWLGIL).

The protein localises to the cell membrane. Functionally, the phosphoenolpyruvate-dependent sugar phosphotransferase system (PTS), a major carbohydrate active transport system, catalyzes the phosphorylation of incoming sugar substrates concomitant with their translocation across the cell membrane. The enzyme II SorABCD PTS system is involved in L-sorbose transport. This is PTS system sorbose-specific EIID component from Lacticaseibacillus casei (Lactobacillus casei).